The sequence spans 314 residues: Olfactory receptor 8U9 (314 aa).

Residues 1 to 25 are Extracellular-facing; it reads MAQINCTQVTEFILVGLTDREELKM. N-linked (GlcNAc...) asparagine glycosylation occurs at Asn5. The helical transmembrane segment at 26-46 threads the bilayer; that stretch reads PLFVVFLSIYLFTTLGNLGLI. Residues 47–54 are Cytoplasmic-facing; it reads LVIRTDAR. Residues 55–75 form a helical membrane-spanning segment; that stretch reads LHTPMYFFLSNLAFVDFCYSS. The Extracellular segment spans residues 76–99; the sequence is VITPKMLGNFLYKQNMISFNACAA. The cysteines at positions 97 and 189 are disulfide-linked. A helical transmembrane segment spans residues 100–120; it reads QLGCFLAFMTAECLLLASMAY. The Cytoplasmic portion of the chain corresponds to 121–133; sequence DRYVAICNPLLYM. A helical transmembrane segment spans residues 134 to 154; sequence VLMSPGICFQLVAAPYSYSFL. Residues 155–196 are Extracellular-facing; it reads VALFHAILTFRLCYCHSNAINHFYCDDMPLLRLTCSDTHSKQ. The chain crosses the membrane as a helical span at residues 197-217; the sequence is LWIFVCAGIMFISSLLIVFIS. Topologically, residues 218–237 are cytoplasmic; sequence YTFIISAILRMRSAEGRRKA. The chain crosses the membrane as a helical span at residues 238–258; the sequence is FSTCGSHMLAVTIFYGTLIFM. The Extracellular portion of the chain corresponds to 259–271; it reads YLQPSSNHSLDTD. Residue Asn265 is glycosylated (N-linked (GlcNAc...) asparagine). Residues 272–292 traverse the membrane as a helical segment; sequence KMASVFYTVIIPMLNPLIYSL. Topologically, residues 293–314 are cytoplasmic; it reads RNKEVKDALKKLIASKNQMLSS.

The protein belongs to the G-protein coupled receptor 1 family.

It is found in the cell membrane. Functionally, potential odorant receptor. The chain is Olfactory receptor 8U9 from Mus musculus (Mouse).